The following is a 1445-amino-acid chain: 3'-5' RNA helicase YTHDC2 (1445 aa).

A disordered region spans residues 1 to 50 (MSRPSSVSPRPPAPSGGGTGGGGGGSGGGGGGGGGGPASCGPGGGGRAKG). The segment covering 15 to 48 (SGGGTGGGGGGSGGGGGGGGGGPASCGPGGGGRA) has biased composition (gly residues). The region spanning 53-121 (DIRIDEEVKI…NRYLTVKKKD (69 aa)) is the R3H domain. The Helicase ATP-binding domain maps to 218 to 384 (VKIIKENKVV…FGSCPVIYIQ (167 aa)). Position 231 to 238 (231 to 238 (GETGSGKT)) interacts with ATP. Residues 331–334 (DEVH) carry the DEAH box motif. ANK repeat units lie at residues 521–553 (TSATALMVAAGRGFTSQVEQLISMGANVHSKAS) and 554–586 (NGWMALDWAKHFGQTEIVDLLESYSASLEFGNL). The Helicase C-terminal domain maps to 627-799 (LLYNICHSCD…ELCLHTKLLA (173 aa)). Residues serine 1104, serine 1105, and serine 1107 each carry the phosphoserine modification. The segment covering 1179–1189 (EQSAGLQQPSG) has biased composition (polar residues). Positions 1179–1303 (EQSAGLQQPS…SPSPRPNMPI (125 aa)) are disordered. Basic and acidic residues predominate over residues 1246–1264 (KYKDRGILHPKRSTDDRSD). The span at 1265–1279 (QSSVKSTDSSSYPSP) shows a compositional bias: low complexity. Phosphoserine is present on residues serine 1278, serine 1282, and serine 1296. In terms of domain architecture, YTH spans 1303-1433 (IRYFIMKSSN…QVGEQLLQLW (131 aa)). RNA is bound by residues 1309–1311 (KSS), tryptophan 1325, and tryptophan 1375.

The protein belongs to the DEAD box helicase family. DEAH subfamily. As to quaternary structure, interacts with MEIOC; binds transcripts that regulate the mitotic cell cycle inhibiting progression into metaphase, thereby allowing meiotic prophase to proceed normally. Interacts (via ANK repeats) with XRN1. Interacts with ZCCHC4. Associates with the small ribosomal subunit. Interacts with RBM46. As to expression, present in male and female germ cells (at protein level). Highly expressed in testis. Not detected in spermatogonia next to the tubule wall but is strongly expressed in spermatocytes, suggesting that it is up-regulated in germ cells upon entry into meiosis (at protein level).

Its subcellular location is the cytoplasm. The protein resides in the perinuclear region. It catalyses the reaction ATP + H2O = ADP + phosphate + H(+). Its function is as follows. 3'-5' RNA helicase that plays a key role in the male and female germline by promoting transition from mitotic to meiotic divisions in stem cells. Specifically recognizes and binds N6-methyladenosine (m6A)-containing RNAs, a modification present at internal sites of mRNAs and some non-coding RNAs that plays a role in the efficiency of RNA processing and stability. Essential for ensuring a successful progression of the meiotic program in the germline by regulating the level of m6A-containing RNAs. Acts by binding and promoting degradation of m6A-containing mRNAs: the 3'-5' RNA helicase activity is required for this process and RNA degradation may be mediated by XRN1 exoribonuclease. Required for both spermatogenesis and oogenesis. The polypeptide is 3'-5' RNA helicase YTHDC2 (Mus musculus (Mouse)).